We begin with the raw amino-acid sequence, 116 residues long: Ribosome-binding factor A (116 aa).

This sequence belongs to the RbfA family. As to quaternary structure, monomer. Binds 30S ribosomal subunits, but not 50S ribosomal subunits or 70S ribosomes.

The protein resides in the cytoplasm. In terms of biological role, one of several proteins that assist in the late maturation steps of the functional core of the 30S ribosomal subunit. Associates with free 30S ribosomal subunits (but not with 30S subunits that are part of 70S ribosomes or polysomes). Required for efficient processing of 16S rRNA. May interact with the 5'-terminal helix region of 16S rRNA. This is Ribosome-binding factor A from Streptococcus pneumoniae (strain ATCC BAA-255 / R6).